The primary structure comprises 936 residues: Protein NNF2 (936 aa).

The Lumenal segment spans residues 1-41 (MEEQFTNQKKVSHLQSLMNTKRSEQPTEFAKKHRFKDTLAL). Residue Lys10 forms a Glycyl lysine isopeptide (Lys-Gly) (interchain with G-Cter in ubiquitin) linkage. The helical transmembrane segment at 42-62 (FLVFLSFNHFTSLCLLVSFIV) threads the bilayer. Topologically, residues 63-120 (ATKCKDFLANCFIILFLSKKPSRHIGEVAHIDISTSKVTNGSSNRKSNSRFFGNSKNS) are cytoplasmic. The helical transmembrane segment at 121–141 (FVIPIPVLICEILFAMLLKIY) threads the bilayer. The Lumenal portion of the chain corresponds to 142-245 (GGDYFVKPIK…FKMLGKHSDS (104 aa)). A helical transmembrane segment spans residues 246-266 (MIYYLSFHILFFSFASSLLHP). At 267 to 936 (HRQTAENKPL…NIHSLIGNSY (670 aa)) the chain is on the cytoplasmic side. Disordered stretches follow at residues 297-351 (RISS…SNIL), 387-437 (GSNS…DFFS), and 512-533 (TSEN…QEKH). Residues 299–308 (SSSSSVSADS) are compositionally biased toward low complexity. Residues 325–351 (LSSSNQTIHPSQQNNSPVPLSSHSNIL) show a composition bias toward polar residues. Low complexity-rich tracts occupy residues 394 to 405 (TTTTSTTTSPTT) and 414 to 428 (SLSN…SNGN). The segment covering 512–529 (TSENSLTPTNSNTSYVSN) has biased composition (polar residues).

It localises to the endoplasmic reticulum membrane. The protein is Protein NNF2 (NNF2) of Saccharomyces cerevisiae (strain ATCC 204508 / S288c) (Baker's yeast).